A 482-amino-acid polypeptide reads, in one-letter code: Glutamyl-tRNA(Gln) amidotransferase subunit A (482 aa).

Catalysis depends on charge relay system residues lysine 80 and serine 159. The active-site Acyl-ester intermediate is the serine 183.

This sequence belongs to the amidase family. GatA subfamily. Heterotrimer of A, B and C subunits.

It carries out the reaction L-glutamyl-tRNA(Gln) + L-glutamine + ATP + H2O = L-glutaminyl-tRNA(Gln) + L-glutamate + ADP + phosphate + H(+). Allows the formation of correctly charged Gln-tRNA(Gln) through the transamidation of misacylated Glu-tRNA(Gln) in organisms which lack glutaminyl-tRNA synthetase. The reaction takes place in the presence of glutamine and ATP through an activated gamma-phospho-Glu-tRNA(Gln). In Neorickettsia sennetsu (strain ATCC VR-367 / Miyayama) (Ehrlichia sennetsu), this protein is Glutamyl-tRNA(Gln) amidotransferase subunit A.